The sequence spans 153 residues: Ribosome maturation factor RimP (153 aa).

This sequence belongs to the RimP family.

It is found in the cytoplasm. Functionally, required for maturation of 30S ribosomal subunits. In Clostridium botulinum (strain 657 / Type Ba4), this protein is Ribosome maturation factor RimP.